Here is a 359-residue protein sequence, read N- to C-terminus: 3-dehydroquinate synthase (359 aa).

NAD(+) contacts are provided by residues 70-75 (DGEQYK), 105-109 (GVIGD), 129-130 (TT), K142, K151, and 169-172 (FYKT). E184, H247, and H264 together coordinate Zn(2+).

Belongs to the sugar phosphate cyclases superfamily. Dehydroquinate synthase family. Co(2+) serves as cofactor. The cofactor is Zn(2+). It depends on NAD(+) as a cofactor.

The protein localises to the cytoplasm. It carries out the reaction 7-phospho-2-dehydro-3-deoxy-D-arabino-heptonate = 3-dehydroquinate + phosphate. The protein operates within metabolic intermediate biosynthesis; chorismate biosynthesis; chorismate from D-erythrose 4-phosphate and phosphoenolpyruvate: step 2/7. In terms of biological role, catalyzes the conversion of 3-deoxy-D-arabino-heptulosonate 7-phosphate (DAHP) to dehydroquinate (DHQ). The protein is 3-dehydroquinate synthase of Francisella tularensis subsp. mediasiatica (strain FSC147).